Reading from the N-terminus, the 206-residue chain is LexA repressor (206 aa).

Positions 28-48 (RAEIARELGFRSANAAEEHLK) form a DNA-binding region, H-T-H motif. Residues Ser123 and Lys160 each act as for autocatalytic cleavage activity in the active site.

Belongs to the peptidase S24 family. In terms of assembly, homodimer.

The catalysed reaction is Hydrolysis of Ala-|-Gly bond in repressor LexA.. In terms of biological role, represses a number of genes involved in the response to DNA damage (SOS response), including recA and lexA. In the presence of single-stranded DNA, RecA interacts with LexA causing an autocatalytic cleavage which disrupts the DNA-binding part of LexA, leading to derepression of the SOS regulon and eventually DNA repair. The sequence is that of LexA repressor from Vibrio atlanticus (strain LGP32) (Vibrio splendidus (strain Mel32)).